We begin with the raw amino-acid sequence, 154 residues long: Crossover junction endodeoxyribonuclease RuvC (154 aa).

Residues aspartate 7, glutamate 67, and aspartate 139 contribute to the active site. Residues aspartate 7, glutamate 67, and aspartate 139 each coordinate Mg(2+).

It belongs to the RuvC family. As to quaternary structure, homodimer which binds Holliday junction (HJ) DNA. The HJ becomes 2-fold symmetrical on binding to RuvC with unstacked arms; it has a different conformation from HJ DNA in complex with RuvA. In the full resolvosome a probable DNA-RuvA(4)-RuvB(12)-RuvC(2) complex forms which resolves the HJ. It depends on Mg(2+) as a cofactor.

The protein resides in the cytoplasm. The catalysed reaction is Endonucleolytic cleavage at a junction such as a reciprocal single-stranded crossover between two homologous DNA duplexes (Holliday junction).. Functionally, the RuvA-RuvB-RuvC complex processes Holliday junction (HJ) DNA during genetic recombination and DNA repair. Endonuclease that resolves HJ intermediates. Cleaves cruciform DNA by making single-stranded nicks across the HJ at symmetrical positions within the homologous arms, yielding a 5'-phosphate and a 3'-hydroxyl group; requires a central core of homology in the junction. The consensus cleavage sequence is 5'-(A/T)TT(C/G)-3'. Cleavage occurs on the 3'-side of the TT dinucleotide at the point of strand exchange. HJ branch migration catalyzed by RuvA-RuvB allows RuvC to scan DNA until it finds its consensus sequence, where it cleaves and resolves the cruciform DNA. The polypeptide is Crossover junction endodeoxyribonuclease RuvC (Synechococcus sp. (strain CC9902)).